The primary structure comprises 646 residues: Long-chain fatty acid transport protein 1 (646 aa).

Residues 1–13 (MRTPGAGTASVAS) are Extracellular-facing. The helical transmembrane segment at 14–34 (LGLLWLLGLPWTWSAAAAFGV) threads the bilayer. Over 35–646 (YVGSGGWRFL…ARICAGDFSL (612 aa)) the chain is Cytoplasmic. Positions 191-475 (EVSEQLGKSL…YVSDSATNKK (285 aa)) are sufficient for oligomerization. 246-257 (YIYTSGTTGLPK) is an AMP binding site.

The protein belongs to the ATP-dependent AMP-binding enzyme family. Self-associates. May function as a homodimer. Interacts with EPRS1; mediates the translocation of SLC27A1 from the cytoplasm to the plasma membrane thereby increasing the uptake of long-chain fatty acids. Interacts with DGAT2 and this interaction is enhanced in the presence of ZFYVE1. In terms of tissue distribution, expressed in muscle.

The protein resides in the cell membrane. It localises to the endomembrane system. The protein localises to the cytoplasm. It catalyses the reaction a fatty acid(in) = a fatty acid(out). The catalysed reaction is (9Z)-octadecenoate(out) = (9Z)-octadecenoate(in). The enzyme catalyses hexadecanoate(out) = hexadecanoate(in). It carries out the reaction (5Z,8Z,11Z,14Z)-eicosatetraenoate(out) = (5Z,8Z,11Z,14Z)-eicosatetraenoate(in). It catalyses the reaction (9Z,12Z)-octadecadienoate(out) = (9Z,12Z)-octadecadienoate(in). The catalysed reaction is a long-chain fatty acid + ATP + CoA = a long-chain fatty acyl-CoA + AMP + diphosphate. The enzyme catalyses (5Z,8Z,11Z,14Z)-eicosatetraenoate + ATP + CoA = (5Z,8Z,11Z,14Z)-eicosatetraenoyl-CoA + AMP + diphosphate. It carries out the reaction a very long-chain fatty acid + ATP + CoA = a very long-chain fatty acyl-CoA + AMP + diphosphate. It catalyses the reaction tetracosanoate + ATP + CoA = tetracosanoyl-CoA + AMP + diphosphate. Inhibited by Triacsin C. In terms of biological role, mediates the import of long-chain fatty acids (LCFA) into the cell by facilitating their transport at the plasma membrane. Also functions as an acyl-CoA ligase catalyzing the ATP-dependent formation of fatty acyl-CoA using LCFA and very-long-chain fatty acids (VLCFA) as substrates, which prevents fatty acid efflux from cells and might drive more fatty acid uptake. May act directly as a bona fide transporter, or alternatively, in a cytoplasmic or membrane-associated multimeric protein complex to trap and draw fatty acids towards accumulation. Plays a pivotal role in regulating available LCFA substrates from exogenous sources in tissues undergoing high levels of beta-oxidation or triglyceride synthesis. May be involved in regulation of cholesterol metabolism. Probably involved in fatty acid transport across the blood barrier. In Rattus norvegicus (Rat), this protein is Long-chain fatty acid transport protein 1.